The primary structure comprises 134 residues: MASTFRLQIVTPSRTFYDDEVEMAIVRSTEGDLGIMSNHMLMVAPLKIGKVRIKKDGQFREAAISEGFVQVESEYTRIITDTAEWPEEIDVQRAEEAKERAEKRLSASQGEIDRLRAEIALKRALNRLSVANGK.

This sequence belongs to the ATPase epsilon chain family. As to quaternary structure, F-type ATPases have 2 components, CF(1) - the catalytic core - and CF(0) - the membrane proton channel. CF(1) has five subunits: alpha(3), beta(3), gamma(1), delta(1), epsilon(1). CF(0) has three main subunits: a, b and c.

The protein localises to the cell membrane. Produces ATP from ADP in the presence of a proton gradient across the membrane. This is ATP synthase epsilon chain from Alkaliphilus oremlandii (strain OhILAs) (Clostridium oremlandii (strain OhILAs)).